A 445-amino-acid chain; its full sequence is Argininosuccinate synthase (445 aa).

ATP-binding positions include 17-25 (AFSGGLDTS) and alanine 43. Tyrosine 99 provides a ligand contact to L-citrulline. Residues glycine 129 and threonine 131 each coordinate ATP. L-aspartate contacts are provided by threonine 131, asparagine 135, and aspartate 136. Asparagine 135 serves as a coordination point for L-citrulline. Aspartate 136 contacts ATP. L-citrulline-binding residues include arginine 139 and serine 192. Aspartate 194 is a binding site for ATP. L-citrulline contacts are provided by threonine 201, glutamate 203, and glutamate 280.

It belongs to the argininosuccinate synthase family. Type 2 subfamily. As to quaternary structure, homotetramer.

It is found in the cytoplasm. The catalysed reaction is L-citrulline + L-aspartate + ATP = 2-(N(omega)-L-arginino)succinate + AMP + diphosphate + H(+). It participates in amino-acid biosynthesis; L-arginine biosynthesis; L-arginine from L-ornithine and carbamoyl phosphate: step 2/3. This chain is Argininosuccinate synthase, found in Bordetella petrii (strain ATCC BAA-461 / DSM 12804 / CCUG 43448).